The following is a 495-amino-acid chain: METKPNPRRPSNTVLPYQTPRLRDHYLLGKKLGQGQFGTTYLCTEKSTSANYACKSIPKRKLVCREDYEDVWREIQIMHHLSEHPNVVRIKGTYEDSVFVHIVMEVCEGGELFDRIVSKGHFSEREAVKLIKTILGVVEACHSLGVMHRDLKPENFLFDSPKDDAKLKATDFGLSVFYKPGQYLYDVVGSPYYVAPEVLKKCYGPEIDVWSAGVILYILLSGVPPFWAETESGIFRQILQGKLDFKSDPWPTISEAAKDLIYKMLERSPKKRISAHEALCHPWIVDEQAAPDKPLDPAVLSRLKQFSQMNKIKKMALRVIAERLSEEEIGGLKELFKMIDTDNSGTITFEELKAGLKRVGSELMESEIKSLMDAADIDNSGTIDYGEFLAATLHMNKMEREENLVAAFSYFDKDGSGYITIDELQSACTEFGLCDTPLDDMIKEIDLDNDGKIDFSEFTAMMRKGDGVGRSRTMMKNLNFNIADAFGVDGEKSDD.

The Protein kinase domain maps to Tyr-26–Ile-284. ATP is bound by residues Leu-32–Thr-40 and Lys-55. Asp-150 functions as the Proton acceptor in the catalytic mechanism. Phosphoserine is present on Ser-190. An autoinhibitory domain region spans residues Ala-290 to Ile-320. 4 EF-hand domains span residues Glu-327–Glu-362, Leu-363–Met-398, Glu-399–Cys-434, and Leu-438–Val-468. Positions 340, 342, 344, 346, 351, 376, 378, 380, 382, 387, 412, 414, 416, 418, 423, 446, 448, 450, 452, and 457 each coordinate Ca(2+).

Belongs to the protein kinase superfamily. Ser/Thr protein kinase family. CDPK subfamily. Interacts with Di19.

It localises to the cytoplasm. The protein localises to the nucleus. It catalyses the reaction L-seryl-[protein] + ATP = O-phospho-L-seryl-[protein] + ADP + H(+). The catalysed reaction is L-threonyl-[protein] + ATP = O-phospho-L-threonyl-[protein] + ADP + H(+). With respect to regulation, activated by calcium. Autophosphorylation may play an important role in the regulation of the kinase activity. In terms of biological role, may play a role in signal transduction pathways that involve calcium as a second messenger. Functions as a regulator of the calcium-mediated abscisic acid (ABA) signaling pathway. Phosphorylates ABA-responsive transcription factors ABF1 and ABF4 in vitro. This chain is Calcium-dependent protein kinase 11 (CPK11), found in Arabidopsis thaliana (Mouse-ear cress).